Here is a 1408-residue protein sequence, read N- to C-terminus: DNA-directed RNA polymerase subunit beta' (1408 aa).

The Zn(2+) site is built by C70, C72, C85, and C88. Mg(2+) contacts are provided by D460, D462, and D464. 4 residues coordinate Zn(2+): C814, C887, C894, and C897.

The protein belongs to the RNA polymerase beta' chain family. The RNAP catalytic core consists of 2 alpha, 1 beta, 1 beta' and 1 omega subunit. When a sigma factor is associated with the core the holoenzyme is formed, which can initiate transcription. It depends on Mg(2+) as a cofactor. Requires Zn(2+) as cofactor.

The catalysed reaction is RNA(n) + a ribonucleoside 5'-triphosphate = RNA(n+1) + diphosphate. Its function is as follows. DNA-dependent RNA polymerase catalyzes the transcription of DNA into RNA using the four ribonucleoside triphosphates as substrates. The chain is DNA-directed RNA polymerase subunit beta' from Hydrogenovibrio crunogenus (strain DSM 25203 / XCL-2) (Thiomicrospira crunogena).